Consider the following 370-residue polypeptide: Metallophosphoesterase 1 homolog (370 aa).

The chain crosses the membrane as a helical span at residues 7–27 (CFVIVLCALIFCEYVADFVVL). The a divalent metal cation site is built by Asp52, Asp94, Asn132, His225, His275, and His277. Residues 328-348 (FVFNSYLSAGILCLIVIGFQL) traverse the membrane as a helical segment.

It belongs to the metallophosphoesterase superfamily. MPPE1 family. Mn(2+) serves as cofactor.

The protein localises to the membrane. Metallophosphoesterase. This chain is Metallophosphoesterase 1 homolog (PGAP5), found in Drosophila melanogaster (Fruit fly).